The primary structure comprises 172 residues: Adenine phosphoribosyltransferase (172 aa).

This sequence belongs to the purine/pyrimidine phosphoribosyltransferase family. In terms of assembly, homodimer.

It is found in the cytoplasm. The enzyme catalyses AMP + diphosphate = 5-phospho-alpha-D-ribose 1-diphosphate + adenine. It participates in purine metabolism; AMP biosynthesis via salvage pathway; AMP from adenine: step 1/1. In terms of biological role, catalyzes a salvage reaction resulting in the formation of AMP, that is energically less costly than de novo synthesis. This chain is Adenine phosphoribosyltransferase, found in Staphylococcus saprophyticus subsp. saprophyticus (strain ATCC 15305 / DSM 20229 / NCIMB 8711 / NCTC 7292 / S-41).